The chain runs to 113 residues: Tubulin alpha chain (113 aa).

Glutamate 52 contacts GTP. Mg(2+) is bound at residue glutamate 52.

It belongs to the tubulin family. As to quaternary structure, dimer of alpha and beta chains. A typical microtubule is a hollow water-filled tube with an outer diameter of 25 nm and an inner diameter of 15 nM. Alpha-beta heterodimers associate head-to-tail to form protofilaments running lengthwise along the microtubule wall with the beta-tubulin subunit facing the microtubule plus end conferring a structural polarity. Microtubules usually have 13 protofilaments but different protofilament numbers can be found in some organisms and specialized cells. Mg(2+) serves as cofactor.

It is found in the cytoplasm. It localises to the cytoskeleton. The catalysed reaction is GTP + H2O = GDP + phosphate + H(+). Tubulin is the major constituent of microtubules, a cylinder consisting of laterally associated linear protofilaments composed of alpha- and beta-tubulin heterodimers. Microtubules grow by the addition of GTP-tubulin dimers to the microtubule end, where a stabilizing cap forms. Below the cap, tubulin dimers are in GDP-bound state, owing to GTPase activity of alpha-tubulin. This Picea abies (Norway spruce) protein is Tubulin alpha chain (TUBA).